A 492-amino-acid polypeptide reads, in one-letter code: Trehalose-6-phosphate synthase (492 aa).

Position 25 (Arg25) interacts with D-glucose 6-phosphate. UDP-alpha-D-glucose is bound at residue Gly45–Gly46. Tyr101 and Asp155 together coordinate D-glucose 6-phosphate. Residues Arg297 and Lys302 each contribute to the UDP-alpha-D-glucose site. D-glucose 6-phosphate is bound at residue Arg335. Residue Leu400–Glu404 participates in UDP-alpha-D-glucose binding.

The protein belongs to the glycosyltransferase 20 family. As to quaternary structure, homotetramer.

It carries out the reaction ADP-alpha-D-glucose + D-glucose 6-phosphate = alpha,alpha-trehalose 6-phosphate + ADP + H(+). The catalysed reaction is CDP-alpha-D-glucose + D-glucose 6-phosphate = alpha,alpha-trehalose 6-phosphate + CDP + H(+). It catalyses the reaction GDP-alpha-D-glucose + D-glucose 6-phosphate = alpha,alpha-trehalose 6-phosphate + GDP + H(+). The enzyme catalyses TDP-alpha-D-glucose + D-glucose 6-phosphate = 5-methyl-UDP + alpha,alpha-trehalose 6-phosphate + H(+). It carries out the reaction D-glucose 6-phosphate + UDP-alpha-D-glucose = alpha,alpha-trehalose 6-phosphate + UDP + H(+). It participates in glycan biosynthesis; trehalose biosynthesis. Probably involved in the osmoprotection via the biosynthesis of trehalose and in the production of glycogen and alpha-glucan via the TreS-Pep2 branch involved in the biosynthesis of maltose-1-phosphate (M1P). Catalyzes the transfer of glucose from UDP-glucose (UDP-Glc) to D-glucose 6-phosphate (Glc-6-P) to form trehalose-6-phosphate. Probably also able to use ADP-Glc, CDP-Glc, GDP-Glc and TDP-Glc as glucosyl donors. This Mycolicibacterium paratuberculosis (strain ATCC BAA-968 / K-10) (Mycobacterium paratuberculosis) protein is Trehalose-6-phosphate synthase.